The primary structure comprises 577 residues: Maltase A1 (577 aa).

Positions 1–19 are cleaved as a signal peptide; that stretch reads MRPQSAACLLLAIVGFVGA. Residues asparagine 119 and asparagine 151 are each glycosylated (N-linked (GlcNAc...) asparagine). Catalysis depends on aspartate 221, which acts as the Nucleophile. Asparagine 244 carries N-linked (GlcNAc...) asparagine glycosylation. The active-site Proton donor is glutamate 297. Residues asparagine 315 and asparagine 331 are each glycosylated (N-linked (GlcNAc...) asparagine).

The protein belongs to the glycosyl hydrolase 13 family.

It carries out the reaction Hydrolysis of terminal, non-reducing (1-&gt;4)-linked alpha-D-glucose residues with release of alpha-D-glucose.. In Drosophila melanogaster (Fruit fly), this protein is Maltase A1 (Mal-A1).